The chain runs to 535 residues: CTP synthase (535 aa).

The amidoligase domain stretch occupies residues 1-267 (MTKYIFVTGG…DKLVCEHMKL (267 aa)). Serine 13 is a CTP binding site. A UTP-binding site is contributed by serine 13. Residue 14–19 (SLGKGI) coordinates ATP. Tyrosine 54 provides a ligand contact to L-glutamine. Aspartate 71 lines the ATP pocket. Residues aspartate 71 and glutamate 141 each contribute to the Mg(2+) site. Residues 148–150 (DIE), 188–193 (KTKPTQ), and lysine 224 contribute to the CTP site. UTP-binding positions include 188 to 193 (KTKPTQ) and lysine 224. The region spanning 292-534 (TIGLVGKYVE…IGASVEAANQ (243 aa)) is the Glutamine amidotransferase type-1 domain. Glycine 354 lines the L-glutamine pocket. The active-site Nucleophile; for glutamine hydrolysis is the cysteine 381. L-glutamine contacts are provided by residues 382–385 (LGMQ), glutamate 405, and arginine 462. Residues histidine 507 and glutamate 509 contribute to the active site.

It belongs to the CTP synthase family. In terms of assembly, homotetramer. Interacts with BrxC.

The enzyme catalyses UTP + L-glutamine + ATP + H2O = CTP + L-glutamate + ADP + phosphate + 2 H(+). It carries out the reaction L-glutamine + H2O = L-glutamate + NH4(+). The catalysed reaction is UTP + NH4(+) + ATP = CTP + ADP + phosphate + 2 H(+). It functions in the pathway pyrimidine metabolism; CTP biosynthesis via de novo pathway; CTP from UDP: step 2/2. Its activity is regulated as follows. Allosterically activated by GTP, when glutamine is the substrate; GTP has no effect on the reaction when ammonia is the substrate. The allosteric effector GTP functions by stabilizing the protein conformation that binds the tetrahedral intermediate(s) formed during glutamine hydrolysis. Inhibited by the product CTP, via allosteric rather than competitive inhibition. Functionally, catalyzes the ATP-dependent amination of UTP to CTP with either L-glutamine or ammonia as the source of nitrogen. Regulates intracellular CTP levels through interactions with the four ribonucleotide triphosphates. The sequence is that of CTP synthase from Bacillus subtilis (strain 168).